The chain runs to 417 residues: NADH-quinone oxidoreductase subunit D (417 aa).

The protein belongs to the complex I 49 kDa subunit family. In terms of assembly, NDH-1 is composed of 14 different subunits. Subunits NuoB, C, D, E, F, and G constitute the peripheral sector of the complex.

Its subcellular location is the cell inner membrane. The enzyme catalyses a quinone + NADH + 5 H(+)(in) = a quinol + NAD(+) + 4 H(+)(out). NDH-1 shuttles electrons from NADH, via FMN and iron-sulfur (Fe-S) centers, to quinones in the respiratory chain. The immediate electron acceptor for the enzyme in this species is believed to be ubiquinone. Couples the redox reaction to proton translocation (for every two electrons transferred, four hydrogen ions are translocated across the cytoplasmic membrane), and thus conserves the redox energy in a proton gradient. This Coxiella burnetii (strain Dugway 5J108-111) protein is NADH-quinone oxidoreductase subunit D.